A 290-amino-acid polypeptide reads, in one-letter code: Putative speedy protein-like protein 3 (290 aa).

Positions 16-50 (GVDPSPPCRSLGWKRKKEWSDESEEEPEKELAPEP) are disordered. Over residues 36-50 (DESEEEPEKELAPEP) the composition is skewed to acidic residues.

It belongs to the Speedy/Ringo family.

The chain is Putative speedy protein-like protein 3 from Homo sapiens (Human).